The following is a 2149-amino-acid chain: MDGDGGRRDAPGALMEAGRGTGSAGMAEPRARAARLGPQRFLRRSVVESDQEEPPGLEAAETPSAQPPQPLQRRVLLLCKTRRLIAERARGRPAAPAPAAPAAPPGSPSVPSDPGPERAGTQEPSPDPTTASAAATQVPDGGPRQEEAPAPTQEDAGTTEAKPEPGRARKDEPEEEEDDEDDLKAVATSLDGRFLKFDIELGRGSFKTVYKGLDTETWVEVAWCELQDRKLTKLERQRFKEEAEMLKGLQHPNIVRFYDFWESSAKGKRCIVLVTELMTSGTLKTYLKRFKVMKPKVLRSWCRQILKGLLFLHTRTPPIIHRDLKCDNIFITGPTGSVKIGDLGLATLKRASFAKSVIGTPEFMAPEMYEEHYDESVDVYAFGMCMLEMATSEYPYSECQNAAQIYRKVTCGIKPASFEKVHDPEIKEIIGECICKNKEERYEIKDLLSHAFFAEDTGVRVELAEEDHGRKSTIALRLWVEDPKKLKGKPKDNGAIEFTFDLEKETPDEVAQEMIDSGFFHESDVKIVAKSIRDRVALIQWRRERIWPALQSQEPKDSGSPDKARGLPAPLQVQVTYHAQSGQPGQPEPEEPEADQHLLPPTLPASVTSLASDSTFDSGQGSTVYSDSQSSQQSMVLSSLVDTAPTPASCVCSPPVSEGPGLTHSLPTLGAFQQPATVPGLSVGPVPPPARPPLLQQHFPESSMSFTPVLPPPSTPVPTGPSQPAPPVQQPLPMAQPPTLPQVLAPQPMGTVQPVPSHLPPYLAPTSQVVAPAQLKPLQMPQPPLQPLAQVPPQMPQMPVVPPITPLTGLDGLPQTLTDLPAANVAPVPPPQYFSPAVILPSLTTPLPTSPALPMQAVKLPHPPGTPLAVPCQTIVPNAPAAIPLLAVAPQGVAALSIHPAVAQIPAQPVYPAAFPQMVPGDIPPSPHHTVQSLRATPPQLASPVPPQPVQPSVIHLPEQAAPTAASGTQVLLGHPPSYTADVAAPVSAVSLPPAVLSPPLPDTLLPTVPDLLPKVPSSLAPTVVAASQSAPAQTSSLLLPTNPPLPTGPAVAGPCPAVQLMVEVAQEEQVSQDKPPGPPQSSESFGGSDVTSGRDLSDSCEGTFGGGRLEGRTARKHHRRSTRARSRQERASRPRLTILNVCNTGDKMVECQLETHNHKMVTFKFDLDGDAPDEIATYMVEHDFILPAERETFIEQMKDVMDKAEDMLSEDTDADHGSDTGTSPPHLGTCGLATGEENRQSQANAPVYQQNVLHTGKRWFIICPVAEHPATDTSESSPPLPLSSLQPEASQDPAPYPDQLSLTDKPSFPAAQQLLSQAGSSNPPGGASAPLAPSSPPVTTVIPAAPATSTVPESAAGTAMQAGGPGTHQGPASVHETLQPLAETRSAQCTAQPLSTGQGPCTPALEASRCSTGLGEPISTREVSTQGEPLPASVPEPSPPTGATQSVPGQPPPPLPITVGAISLAAPQLPSPPLGPTAPPPPPSALESDGEGPPPRVGFVDNTIKSLDEKLRTLLYQEHVPTSSASAGTPMEASDRDFTLEPLRGDLPSALSDKTPSLTQQTQPSLEKSETAPAGWALAQREQGASSPMTAESSSSNTLGCDSDAGQVASDSSTAPSVPQDASGSSVPTHMDPKDQNSSVPREALAAPMQSGPGSFTVGSPAQLRGARDSGSPHKRPGQQDNSSPAKTVGRFSVVSTQDEWTLASPHSLRYSAPPDVYLDEIPSSPEVKLAVRRVQTASSIEVGVEEPASSDSGDERPRRRSQVQKQSSLPGTGGVASDFVKKATAFLHRSSRAGSLGPETPSRAGVKVPTISITSFHSQSSYISSDNDSEFEDADIKKELRSLREKHLKEISELQSQQKQEIEALYRRLGKPLPPNVGFFHTAPPMGRRRKTSKSKLKAGKLLNPLVQQLKVVASSTGHLSDSSRGPPTKDPRGTKAVQTQQPCSVRASLSTDICSGLASDGGGARGQGWTVYHPTSERGAYKSSSKPRARFLSGPVSVSIWSALKRLCLGKEHSSSLYDSPGSSTSSLAPGPEPGPQPTLHVQAQVNNSNNKKGTFTDDLHKLVDEWTTKTVGAAQVKPTLNQLKQTQKLHDMEASGDARATSVPRAAVGASCLAPAPGPLSTTATPGATPALPVPIPDPESEKPD.

A compositionally biased stretch (basic and acidic residues) spans 1–10 (MDGDGGRRDA). Disordered stretches follow at residues 1–75 (MDGD…QRRV) and 87–183 (ERAR…EDDL). An omega-N-methylarginine mark is found at Arg19 and Arg30. Ser45 is modified (phosphoserine). Positions 95–114 (APAPAAPAAPPGSPSVPSDP) are enriched in pro residues. Residues 161 to 172 (AKPEPGRARKDE) show a composition bias toward basic and acidic residues. Acidic residues predominate over residues 173-182 (PEEEEDDEDD). In terms of domain architecture, Protein kinase spans 195 to 453 (LKFDIELGRG…IKDLLSHAFF (259 aa)). Residues Ser205, 275-278 (TELM), and Lys325 each bind ATP. Residue Asp342 is the Proton acceptor of the active site. Residues Ser352 and Ser356 each carry the phosphoserine; by autocatalysis modification. Ser560 carries the post-translational modification Phosphoserine. 3 disordered regions span residues 578–630 (HAQS…DSQS), 703–728 (SMSF…APPV), and 1067–1133 (QEEQ…ERAS). The span at 605–625 (ASVTSLASDSTFDSGQGSTVY) shows a compositional bias: polar residues. Over residues 709-728 (VLPPPSTPVPTGPSQPAPPV) the composition is skewed to pro residues. A compositionally biased stretch (polar residues) spans 1081–1092 (QSSESFGGSDVT). At Ser1098 the chain carries Phosphoserine. The segment covering 1115–1126 (ARKHHRRSTRAR) has biased composition (basic residues). Ser1210 carries the phosphoserine modification. Disordered stretches follow at residues 1211-1234 (EDTD…CGLA) and 1270-1502 (PATD…GFVD). Low complexity-rich tracts occupy residues 1275-1292 (SESS…EASQ) and 1317-1353 (SQAG…STVP). Polar residues predominate over residues 1386 to 1400 (RSAQCTAQPLSTGQG). Positions 1470–1485 (LPSPPLGPTAPPPPPS) are enriched in pro residues. Ser1507, Ser1566, and Ser1594 each carry phosphoserine. Disordered stretches follow at residues 1521–1727 (VPTS…PSSP) and 1739–1778 (ASSI…GGVA). A compositionally biased stretch (polar residues) spans 1553–1567 (SDKTPSLTQQTQPSL). Positions 1587–1597 (SSPMTAESSSS) are enriched in low complexity. Residues 1610 to 1629 (ASDSSTAPSVPQDASGSSVP) are compositionally biased toward polar residues. Ser1725, Ser1726, Ser1770, and Ser1797 each carry phosphoserine. A compositionally biased stretch (polar residues) spans 1916-1928 (ASSTGHLSDSSRG). Positions 1916–1947 (ASSTGHLSDSSRGPPTKDPRGTKAVQTQQPCS) are disordered. Ser1962 carries the post-translational modification Phosphoserine. Residues 2018–2031 (SSLYDSPGSSTSSL) are compositionally biased toward polar residues. Disordered stretches follow at residues 2018–2044 (SSLY…PTLH) and 2122–2149 (GPLS…EKPD). Over residues 2122–2135 (GPLSTTATPGATPA) the composition is skewed to low complexity.

The protein belongs to the protein kinase superfamily. Ser/Thr protein kinase family. WNK subfamily. In terms of assembly, forms a complex with the phosphorylated form of STK39 in the brain. The cofactor is Mg(2+). Post-translationally, autophosphorylated. Autophosphorylation at Ser-352 and Ser-356 promotes its activity. Brain and heart.

Its subcellular location is the cytoplasm. It localises to the cell membrane. The enzyme catalyses L-seryl-[protein] + ATP = O-phospho-L-seryl-[protein] + ADP + H(+). It carries out the reaction L-threonyl-[protein] + ATP = O-phospho-L-threonyl-[protein] + ADP + H(+). With respect to regulation, activation requires autophosphorylation of Ser-356 and, to a lower extent, Ser-352. Functionally, serine/threonine-protein kinase component of the WNK2-SPAK/OSR1 kinase cascade, which plays an important role in the regulation of electrolyte homeostasis, cell signaling, survival, and proliferation. The WNK2-SPAK/OSR1 kinase cascade is composed of WNK2, which mediates phosphorylation and activation of downstream kinases OXSR1/OSR1 and STK39/SPAK. Following activation, OXSR1/OSR1 and STK39/SPAK catalyze phosphorylation of ion cotransporters, regulating their activity. Acts as an activator and inhibitor of sodium-coupled chloride cotransporters and potassium-coupled chloride cotransporters respectively. Activates SLC12A2, SCNN1A, SCNN1B, SCNN1D and SGK1 and inhibits SLC12A5. Negatively regulates the EGF-induced activation of the ERK/MAPK-pathway and the downstream cell cycle progression. Affects MAPK3/MAPK1 activity by modulating the activity of MAP2K1 and this modulation depends on phosphorylation of MAP2K1 by PAK1. WNK2 acts by interfering with the activity of PAK1 by controlling the balance of the activity of upstream regulators of PAK1 activity, RHOA and RAC1, which display reciprocal activity. The chain is Serine/threonine-protein kinase WNK2 from Mus musculus (Mouse).